Consider the following 360-residue polypeptide: S-adenosylmethionine:tRNA ribosyltransferase-isomerase (360 aa).

This sequence belongs to the QueA family. In terms of assembly, monomer.

It is found in the cytoplasm. It catalyses the reaction 7-aminomethyl-7-carbaguanosine(34) in tRNA + S-adenosyl-L-methionine = epoxyqueuosine(34) in tRNA + adenine + L-methionine + 2 H(+). The protein operates within tRNA modification; tRNA-queuosine biosynthesis. Functionally, transfers and isomerizes the ribose moiety from AdoMet to the 7-aminomethyl group of 7-deazaguanine (preQ1-tRNA) to give epoxyqueuosine (oQ-tRNA). This is S-adenosylmethionine:tRNA ribosyltransferase-isomerase from Burkholderia mallei (strain NCTC 10247).